A 331-amino-acid chain; its full sequence is XylDLEGF operon transcriptional activator 1 (331 aa).

One can recognise an HTH araC/xylS-type domain in the interval 214 to 315 (ERVVQFIEEN…GELPSDTLRR (102 aa)). DNA-binding regions (H-T-H motif) lie at residues 231-252 (ERLAELALMSPRSLYTLFEKHA) and 282-305 (VTEMALDYGFFHTGRFAENYRSTF).

It localises to the cytoplasm. Its function is as follows. Regulatory protein of the TOL plasmid xyl operons. XylS activates the xylXYZLTEGFJQKIH operon required for the degradation of toluene, m-xylene and p-xylene. The polypeptide is XylDLEGF operon transcriptional activator 1 (xylS1) (Pseudomonas putida (Arthrobacter siderocapsulatus)).